The primary structure comprises 229 residues: Vacuolar protein-sorting-associated protein 60 (229 aa).

Positions 9–155 form a coiled coil; the sequence is NKKSHDQLLQ…QGDELQEVLA (147 aa). S12 carries the post-translational modification Phosphoserine. An interaction with VTA1 region spans residues 128–159; it reads INIDKLQDMQDEMLDLIEQGDELQEVLAMNNN. The tract at residues 186 to 229 is disordered; that stretch reads PTSENSLGNDMPSYLLGANAPPAFIDEEPNLDTEDKNKALESAQ. The segment covering 218-229 has biased composition (basic and acidic residues); the sequence is TEDKNKALESAQ.

This sequence belongs to the SNF7 family. In terms of assembly, interacts with VTA1; the interaction occurs at he endosomal membrane.

It is found in the endosome membrane. Its subcellular location is the vacuole membrane. Its function is as follows. Has a role in a late stage of multivesicular body (MVB) formation. Can stimulate VPS4 ATPase activity via VTA1. This chain is Vacuolar protein-sorting-associated protein 60 (VPS60), found in Saccharomyces cerevisiae (strain ATCC 204508 / S288c) (Baker's yeast).